The primary structure comprises 617 residues: Solute carrier family 2, facilitated glucose transporter member 12 (617 aa).

The segment at 1 to 29 (MVPVENTEGPSLLNQKGTAVETEGSGSRH) is disordered. At 1-44 (MVPVENTEGPSLLNQKGTAVETEGSGSRHPPWARGCGMFTFLSS) the chain is on the cytoplasmic side. The span at 8–17 (EGPSLLNQKG) shows a compositional bias: polar residues. A helical membrane pass occupies residues 45 to 65 (VTAAVSGLLVGYELGIISGAL). The Extracellular portion of the chain corresponds to 66 to 80 (LQIKTLLALSCHEQE). Residues 81-101 (MVVSSLVIGALLASLTGGVLI) form a helical membrane-spanning segment. Residues 102–115 (DRYGRRTAIILSSC) lie on the Cytoplasmic side of the membrane. The chain crosses the membrane as a helical span at residues 116–136 (LLGLGSLVLILSLSYTVLIVG). Position 137 (arginine 137) is a topological domain, extracellular. The helical transmembrane segment at 138–158 (IAIGVSISLSSIATCVYIAEI) threads the bilayer. The Cytoplasmic portion of the chain corresponds to 159–172 (APQHRRGLLVSLNE). Residues 173 to 193 (LMIVIGILSAYISNYAFANVF) form a helical membrane-spanning segment. Residues 194–197 (HGWK) lie on the Extracellular side of the membrane. Residues 198 to 218 (YMFGLVIPLGVLQAIAMYFLP) form a helical membrane-spanning segment. The Cytoplasmic portion of the chain corresponds to 219–278 (PSPRFLVMKGQEGAASKVLGRLRALSDTTEELTVIKSSLKDEYQYSFWDLFRSKDNMRTR). A helical transmembrane segment spans residues 279–299 (IMIGLTLVFFVQITGQPNILF). Residues 300 to 317 (YASTVLKSVGFQSNEAAS) lie on the Extracellular side of the membrane. The chain crosses the membrane as a helical span at residues 318-338 (LASTGVGVVKVISTIPATLLV). Residues 339-345 (DHVGSKT) are Cytoplasmic-facing. Residues 346 to 366 (FLCIGSSVMAASLVTMGIVNL) traverse the membrane as a helical segment. Residues 367 to 466 (NIHMNFTHIC…PAFLKWLSLA (100 aa)) lie on the Extracellular side of the membrane. Residues asparagine 371, asparagine 383, asparagine 396, and asparagine 401 are each glycosylated (N-linked (GlcNAc...) asparagine). Residues 467–487 (SLLVYVAAFSIGLGPMPWLVL) traverse the membrane as a helical segment. The Cytoplasmic segment spans residues 488–498 (SEIFPGGIRGR). The helical transmembrane segment at 499–519 (AMALTSSMNWGINLLISLTFL) threads the bilayer. Over 520-528 (TVTDLIGLP) the chain is Extracellular. The chain crosses the membrane as a helical span at residues 529 to 549 (WVCFIYTIMSLASLLFVVMFI). Topologically, residues 550–617 (PETKGCSLEQ…GQSRQLSPET (68 aa)) are cytoplasmic.

This sequence belongs to the major facilitator superfamily. Sugar transporter (TC 2.A.1.1) family. Glucose transporter subfamily. Predominantly expressed in skeletal muscle, heart and prostate, with lower levels in brain, placenta and kidney.

It is found in the cell membrane. The protein localises to the endomembrane system. Its subcellular location is the cytoplasm. The protein resides in the perinuclear region. It catalyses the reaction D-glucose(out) = D-glucose(in). Its function is as follows. Insulin-independent facilitative glucose transporter. The protein is Solute carrier family 2, facilitated glucose transporter member 12 of Homo sapiens (Human).